Here is a 1351-residue protein sequence, read N- to C-terminus: Non-structural polyprotein 1AB (1351 aa).

Residues 105 to 144 (LVQDHKAKTREVEDLKSQLSQLRMEHEILRHEYERLKLKS) adopt a coiled-coil conformation. The next 5 membrane-spanning stretches (helical) occupy residues 153–173 (LKVLLFSLLLGLLFAGVTNGA), 231–251 (LVFQTVFNWYFCATALAVYYM), 257–277 (PIVMFVTLALATLSQFQLLAV), 304–324 (ISILVSFCVLVLSVMIGTFMA), and 337–357 (VVFAIVCYSHVAMILNIPPWV). Catalysis depends on charge relay system; for serine protease activity residues H452, D481, and S544. The stretch at 579–635 (EVRKISKREQELEDRVKQLEGMLNMDQAYVDSNLIVDLVREAVQREMKVLRTELANL) forms a coiled coil. Y662 bears the O-(5'-phospho-RNA)-tyrosine mark. The segment covering 687–699 (YDDEDEQSEEEAG) has biased composition (acidic residues). 2 disordered regions span residues 687–708 (YDDEDEQSEEEAGYPDWSDPGD) and 822–842 (RKRVQQPKKLQRGPEDPGPEE). Residues 822–832 (RKRVQQPKKLQ) show a composition bias toward basic residues. Basic and acidic residues predominate over residues 833–842 (RGPEDPGPEE). One can recognise a RdRp catalytic domain in the interval 1085 to 1217 (PYWIEFDWTR…TSPSVPNDYV (133 aa)).

The protein belongs to the astroviridae polyprotein 1AB family. In terms of assembly, monomer. Cleaved by the viral and host proteases. The protease is probably autocatalytically cleaved.

It is found in the host membrane. It carries out the reaction RNA(n) + a ribonucleoside 5'-triphosphate = RNA(n+1) + diphosphate. Responsible for the cleavage of the polyprotein into functional products. Functionally, protein covalently attached to the 5' extremity of the genomic and subgenomic RNAs. It may serve as a primer for the replicase. This chain is Non-structural polyprotein 1AB (ORF1), found in Ovis aries (Sheep).